Here is a 659-residue protein sequence, read N- to C-terminus: Cysteine-rich receptor-like protein kinase 7 (659 aa).

The signal sequence occupies residues 1–23 (MSSLFPFIFLFLFSFLTSFRASA). Residues 24 to 273 (QDPRFLAYYC…SLSDKSGNSN (250 aa)) lie on the Extracellular side of the membrane. 2 consecutive Gnk2-homologous domains span residues 27–131 (RFLA…HKNI) and 142–244 (FILR…LYDF). Asn35, Asn42, Asn60, Asn69, and Asn103 each carry an N-linked (GlcNAc...) asparagine glycan. An N-linked (GlcNAc...) asparagine glycan is attached at Asn246. The helical transmembrane segment at 274 to 294 (VVVVAVVVPIIVAVLIFIAGY) threads the bilayer. The Cytoplasmic portion of the chain corresponds to 295–659 (CFFAKRAKKT…DKSMSDLDPR (365 aa)). In terms of domain architecture, Protein kinase spans 336–622 (FSENNKIGRG…ALPAPQQPGF (287 aa)). ATP-binding positions include 342–350 (IGRGGFGDV) and Lys364. At Tyr409 the chain carries Phosphotyrosine. Asp461 acts as the Proton acceptor in catalysis. Position 465 is a phosphoserine (Ser465). Thr501 bears the Phosphothreonine mark. Tyr509 bears the Phosphotyrosine mark. The disordered stretch occupies residues 626-659 (SRPGTNRLDSDQSTTNKSVTVSIDDKSMSDLDPR). Over residues 636 to 646 (DQSTTNKSVTV) the composition is skewed to polar residues. Positions 648–659 (IDDKSMSDLDPR) are enriched in basic and acidic residues.

It belongs to the protein kinase superfamily. Ser/Thr protein kinase family. CRK subfamily.

Its subcellular location is the membrane. It catalyses the reaction L-seryl-[protein] + ATP = O-phospho-L-seryl-[protein] + ADP + H(+). It carries out the reaction L-threonyl-[protein] + ATP = O-phospho-L-threonyl-[protein] + ADP + H(+). In Arabidopsis thaliana (Mouse-ear cress), this protein is Cysteine-rich receptor-like protein kinase 7 (CRK7).